The sequence spans 329 residues: Flotillin-like protein FloA (329 aa).

Helical transmembrane passes span 4 to 24 (IAFILIVGAILVFISLFFAIV) and 26 to 46 (VGLWISAFAANVRVSIFTLIG).

Belongs to the flotillin-like FloA family. In terms of assembly, homooligomerizes.

It localises to the cell membrane. The protein localises to the membrane raft. Found in functional membrane microdomains (FMM) that may be equivalent to eukaryotic membrane rafts. FMMs are highly dynamic and increase in number as cells age. Flotillins are thought to be important factors in membrane fluidity. The chain is Flotillin-like protein FloA from Acetivibrio thermocellus (strain ATCC 27405 / DSM 1237 / JCM 9322 / NBRC 103400 / NCIMB 10682 / NRRL B-4536 / VPI 7372) (Clostridium thermocellum).